A 197-amino-acid polypeptide reads, in one-letter code: Large ribosomal subunit protein uL10 (197 aa).

Positions 162–197 (READGETAETPAQETASDDSKSTKAEASDASTTENK) are disordered. Residues 179 to 188 (DDSKSTKAEA) are compositionally biased toward basic and acidic residues.

The protein belongs to the universal ribosomal protein uL10 family. As to quaternary structure, part of the ribosomal stalk of the 50S ribosomal subunit. The N-terminus interacts with L11 and the large rRNA to form the base of the stalk. The C-terminus forms an elongated spine to which L12 dimers bind in a sequential fashion forming a multimeric L10(L12)X complex.

Functionally, forms part of the ribosomal stalk, playing a central role in the interaction of the ribosome with GTP-bound translation factors. In Oenococcus oeni (strain ATCC BAA-331 / PSU-1), this protein is Large ribosomal subunit protein uL10.